A 153-amino-acid chain; its full sequence is 3-hydroxyacyl-[acyl-carrier-protein] dehydratase FabZ (153 aa).

The active site involves histidine 54.

Belongs to the thioester dehydratase family. FabZ subfamily.

The protein resides in the cytoplasm. The enzyme catalyses a (3R)-hydroxyacyl-[ACP] = a (2E)-enoyl-[ACP] + H2O. In terms of biological role, involved in unsaturated fatty acids biosynthesis. Catalyzes the dehydration of short chain beta-hydroxyacyl-ACPs and long chain saturated and unsaturated beta-hydroxyacyl-ACPs. The chain is 3-hydroxyacyl-[acyl-carrier-protein] dehydratase FabZ from Chlamydia muridarum (strain MoPn / Nigg).